Consider the following 224-residue polypeptide: Protein FAM3D (224 aa).

An N-terminal signal peptide occupies residues 1-25 (MRVSGVLRLLALIFAIVTTWMFIRS). 2 cysteine pairs are disulfide-bonded: Cys-55–Cys-83 and Cys-61–Cys-218. In terms of domain architecture, GG-type lectin spans 64 to 222 (NYFAFKICSG…LEMEGCMPPK (159 aa)). A glycan (N-linked (GlcNAc...) asparagine) is linked at Asn-107.

Belongs to the FAM3 family. In terms of tissue distribution, abundantly expressed in placenta and weakly expressed in small intestine.

It localises to the secreted. This Homo sapiens (Human) protein is Protein FAM3D (FAM3D).